Consider the following 90-residue polypeptide: Protein RALF-like 3 (90 aa).

Positions 1-29 are cleaved as a signal peptide; the sequence is MSNLRGTNRFILVAVLVSFVFLSIMNAEA. 2 cysteine pairs are disulfide-bonded: C59–C67 and C80–C86.

Belongs to the plant rapid alkalinization factor (RALF) family.

It is found in the secreted. Its function is as follows. Cell signaling peptide that may regulate plant stress, growth, and development. Mediates a rapid alkalinization of extracellular space by mediating a transient increase in the cytoplasmic Ca(2+) concentration leading to a calcium-dependent signaling events through a cell surface receptor and a concomitant activation of some intracellular mitogen-activated protein kinases. This is Protein RALF-like 3 (RALFL3) from Arabidopsis thaliana (Mouse-ear cress).